We begin with the raw amino-acid sequence, 163 residues long: Dual specificity phosphatase 28 (163 aa).

Residues Pro-10–Ala-151 enclose the Tyrosine-protein phosphatase domain. Cys-95 acts as the Phosphocysteine intermediate in catalysis.

The protein belongs to the protein-tyrosine phosphatase family. Non-receptor class dual specificity subfamily. Monomer.

The enzyme catalyses O-phospho-L-tyrosyl-[protein] + H2O = L-tyrosyl-[protein] + phosphate. The catalysed reaction is O-phospho-L-seryl-[protein] + H2O = L-seryl-[protein] + phosphate. It catalyses the reaction O-phospho-L-threonyl-[protein] + H2O = L-threonyl-[protein] + phosphate. Its function is as follows. Has phosphatase activity with the synthetic substrate 6,8-difluoro-4-methylumbelliferyl phosphate (in vitro). Has almost no detectable activity with phosphotyrosine, even less activity with phosphothreonine and displays complete lack of activity with phosphoserine. The poor activity with phosphotyrosine may be due to steric hindrance by bulky amino acid sidechains that obstruct access to the active site. The polypeptide is Dual specificity phosphatase 28 (Dusp28) (Mus musculus (Mouse)).